The sequence spans 350 residues: TATA box-binding protein-like 2 (350 aa).

The interval 82-150 (ENRDQTVTGN…QPSPETPNSN (69 aa)) is disordered. Basic and acidic residues predominate over residues 94–116 (ASEESCRTRDRQSQLQLPDEHGS). 2 stretches are compositionally biased toward polar residues: residues 118–128 (LNLNSNSSPDP) and 139–150 (SNQPSPETPNSN).

It belongs to the TBP family. Interacts with TAF3. As to expression, expressed in myotubes and myofibers (at protein level). Expressed in a wide variety of tissues with highest levels in heart, lung, liver, uterus and placenta and especially the gonads. Expression is higher in the ovary than the testis, and within the ovary expression is localized to the oocytes.

The protein localises to the cytoplasm. It is found in the nucleus. Functionally, transcription factor required in complex with TAF3 for the differentiation of myoblasts into myocytes. The complex replaces TFIID at specific promoters at an early stage in the differentiation process. This is TATA box-binding protein-like 2 from Mus musculus (Mouse).